A 193-amino-acid chain; its full sequence is Coiled-coil domain-containing protein 184 (193 aa).

Residues glycine 39–glutamine 68 are a coiled coil. The interval glycine 101 to proline 176 is disordered. Residues proline 135–lysine 146 show a composition bias toward acidic residues.

In Rattus norvegicus (Rat), this protein is Coiled-coil domain-containing protein 184 (Ccdc184).